A 953-amino-acid chain; its full sequence is Trafficking kinesin-binding protein 1 (953 aa).

The region spanning 47–354 (LEEQLPHYKL…EELKNLRNKT (308 aa)) is the HAP1 N-terminal domain. A coiled-coil region spans residues 104–356 (QMTKTYNDID…LKNLRNKTMP (253 aa)). The tract at residues 359–509 (TSRRYHSLGL…RRLSLRRENY (151 aa)) is interaction with HGS. O-linked (GlcNAc) serine glycosylation is present at Ser-447. The tract at residues 472 to 495 (AADLGNDERSKKPGTPGTPGSHDL) is disordered. Positions 492–532 (SHDLETALRRLSLRRENYLSERRFFEEEQERKLQELAEKGE) form a coiled coil. Ser-537 carries the post-translational modification Phosphoserine. An interaction with OGT region spans residues 658 to 672 (PGKCMSQTNSTFTFT). O-linked (GlcNAc) serine glycans are attached at residues Ser-680 and Ser-719. The residue at position 719 (Ser-719) is a Phosphoserine. The tract at residues 777–796 (VIPSTPPNSPMQTPTSSPPS) is disordered. Positions 786 to 796 (PMQTPTSSPPS) are enriched in low complexity. Phosphoserine is present on Ser-919. O-linked (GlcNAc) threonine glycosylation is present at Thr-935.

This sequence belongs to the milton family. Interacts with RHOT1 and RHOT2. Found in a complex with KIF5B, OGT, RHOT1 and RHOT2. Interacts with HGS. Interacts with GABRA1. Interacts with KIF5C. Interacts with OGT; stable interaction is not required for glycosylation of this protein by OGT. Isoform 1 interacts with OGT. O-glycosylated. Glycosylated by OGT; glycosylation in response to increased extracellular glucose levels is required for and leads to regulation of mitochondrial motility by OGT. High expression in spinal cord and moderate expression in all other tissues and specific brain regions examined. Expressed in all cell lines examined.

The protein localises to the cytoplasm. It localises to the nucleus. It is found in the mitochondrion. The protein resides in the early endosome. Its subcellular location is the endosome. The protein localises to the mitochondrion membrane. It localises to the cell cortex. Its function is as follows. Involved in the regulation of endosome-to-lysosome trafficking, including endocytic trafficking of EGF-EGFR complexes and GABA-A receptors. Involved in mitochondrial motility. When O-glycosylated, abolishes mitochondrial motility. Crucial for recruiting OGT to the mitochondrial surface of neuronal processes. TRAK1 and RHOT form an essential protein complex that links KIF5 to mitochondria for light chain-independent, anterograde transport of mitochondria. The sequence is that of Trafficking kinesin-binding protein 1 (TRAK1) from Homo sapiens (Human).